The primary structure comprises 398 residues: Chalcone synthase 1 (398 aa).

The active site involves Cys167.

Belongs to the thiolase-like superfamily. Chalcone/stilbene synthases family.

The enzyme catalyses (E)-4-coumaroyl-CoA + 3 malonyl-CoA + 3 H(+) = 2',4,4',6'-tetrahydroxychalcone + 3 CO2 + 4 CoA. The protein operates within secondary metabolite biosynthesis; flavonoid biosynthesis. Functionally, the primary product of this enzyme is 4,2',4',6'-tetrahydroxychalcone (also termed naringenin-chalcone or chalcone) which can under specific conditions spontaneously isomerize into naringenin. In Gerbera hybrida (Daisy), this protein is Chalcone synthase 1 (CHS1).